Reading from the N-terminus, the 156-residue chain is Ribosomal RNA large subunit methyltransferase H (156 aa).

S-adenosyl-L-methionine contacts are provided by residues Leu73, Gly104, and 123–128 (LSSLTL).

The protein belongs to the RNA methyltransferase RlmH family. As to quaternary structure, homodimer.

The protein resides in the cytoplasm. It catalyses the reaction pseudouridine(1915) in 23S rRNA + S-adenosyl-L-methionine = N(3)-methylpseudouridine(1915) in 23S rRNA + S-adenosyl-L-homocysteine + H(+). Functionally, specifically methylates the pseudouridine at position 1915 (m3Psi1915) in 23S rRNA. The polypeptide is Ribosomal RNA large subunit methyltransferase H (Neisseria meningitidis serogroup C (strain 053442)).